A 588-amino-acid chain; its full sequence is MNNSINHKFHHISRAEYQELLAVSRGDAVADYIIDNVSILDLINGGEISGPIVIKGRYIAGVGAEYTDAPALQRIDARGATAVPGFIDAHLHIESSMMTPVTFETATLPRGLTTVICDPHEIVNVMGEAGFAWFARCAEQARQNQYLQVSSCVPALEGCDVNGASFTLEQMLAWRDHPQVTGLAEMMDYPGVISGQNALLDKLDAFRHLTLDGHCPGLGGKELNAYIAAGIENCHESYQLEEGRRKLQLGMSLMIREGSAARNLNALAPLINEFNSPQCMLCTDDRNPWEIAHEGHIDALIRRLIEQHNVPLHVAYRVASWSTARHFGLNHLGLLAPGKQADIVLLSDARKVTVQQVLVKGEPIDAQTLQAEESARLAQSAPPYGNTIARQPVSASDFALQFTPGKRYRVIDVIHNELITHSRSSVYSENGFDRDDVCFIAVLERYGQRLAPACGLLGGFGLNEGALAATVSHDSHNIVVIGRSAEEMALAVNQVIQDGGGLCVVRNGQVQSHLPLPIAGLMSTDTAQSLAEQIDALKAAARECGPLPDEPFIQMAFLSLPVIPALKLTSQGLFDGEKFAFTTLEVTE.

It belongs to the metallo-dependent hydrolases superfamily. Adenine deaminase family. In terms of assembly, homodimer. Mn(2+) serves as cofactor.

It carries out the reaction adenine + H2O + H(+) = hypoxanthine + NH4(+). This Escherichia coli O17:K52:H18 (strain UMN026 / ExPEC) protein is Adenine deaminase.